Consider the following 398-residue polypeptide: Endoglucanase (398 aa).

The N-terminal stretch at 1 to 23 (MSPLKCMALAALGAVMFVGSAQA) is a signal peptide. Residue glutamate 58 is the Proton donor of the active site. Residue aspartate 119 is the Nucleophile of the active site.

The protein belongs to the glycosyl hydrolase 8 (cellulase D) family.

The protein resides in the secreted. It catalyses the reaction Endohydrolysis of (1-&gt;4)-beta-D-glucosidic linkages in cellulose, lichenin and cereal beta-D-glucans.. It participates in glycan metabolism; bacterial cellulose biosynthesis. Functionally, hydrolyzes carboxymethylcellulose. The protein is Endoglucanase (bcsZ) of Pseudomonas fluorescens (strain SBW25).